The sequence spans 1370 residues: Zinc finger MYM-type protein 3 (1370 aa).

3 stretches are compositionally biased toward low complexity: residues 1–12, 40–56, and 130–146; these read MDPSDFPSPFDP, APSRGWAPPGPSPSSGA, and GAGASPPSPEGLLEPLA. Disordered stretches follow at residues 1–73 and 85–310; these read MDPS…PGGV and GLLY…MGTK. Positions 227–255 are enriched in basic and acidic residues; the sequence is TGKEIEKPPERVQKRSERVRRAEPPKPEV. Phosphoserine is present on residues Ser-265 and Ser-269. Residues 265–281 are compositionally biased toward acidic residues; it reads SDEDSDAMVDDPNDEDF. Residues Lys-310, Lys-322, and Lys-330 each participate in a glycyl lysine isopeptide (Lys-Gly) (interchain with G-Cter in SUMO2) cross-link. MYM-type zinc fingers lie at residues 334–368, 380–424, 431–466, 479–513, 523–561, 569–606, 614–648, 655–694, and 701–735; these read QLFCSSSCLTTYSKKPLGRKTCTFCKKEIWNTKDS, HEFC…LHEV, HRLCSDSCFSKFRANKGLKTNCCDQCGAYIYARPGG, KRFCNTTCLGAYKKKNTRVYPCVWCKTLCKNFEML, SLFCSLCCTTSYKVKQAGLTGPPRPCSFCRRSLSDPCYY, YQFCSPSCWTKFQHTSPEGGIHLSCHYCHSLFSGKPEV, FQFCCRDCCEDFKRLRGVVSQCEHCRQEKLLHEKL, KSFCSEGCVLLYKQDFTKKLGLCCITCTYCSQTCQRGVTE, and WDFCSEDCKTKYLLWYCKAARCHACKRQGKLLETI. The span at 761 to 789 shows a compositional bias: polar residues; it reads NLDTQSGPESLLNSQSSESKPQTPSQTKV. The disordered stretch occupies residues 761 to 831; the sequence is NLDTQSGPES…PPPPATPRKN (71 aa). Glycyl lysine isopeptide (Lys-Gly) (interchain with G-Cter in SUMO2) cross-links involve residues Lys-780 and Lys-788. Residues 790–799 are compositionally biased toward basic and acidic residues; it reads ENNHTVRTPD. Thr-797 carries the post-translational modification Phosphothreonine. Lys-806 is covalently cross-linked (Glycyl lysine isopeptide (Lys-Gly) (interchain with G-Cter in SUMO2)). The span at 816–827 shows a compositional bias: pro residues; the sequence is VPTPPPPPPPAT. A phosphothreonine mark is found at Thr-818 and Thr-827. Glycyl lysine isopeptide (Lys-Gly) (interchain with G-Cter in SUMO2) cross-links involve residues Lys-848, Lys-862, Lys-921, and Lys-1276.

In terms of assembly, may be a component of a BHC histone deacetylase complex that contains HDAC1, HDAC2, HMG20B/BRAF35, KDM1A, RCOR1/CoREST, PHF21A/BHC80, ZMYM2, ZNF217, ZMYM3, GSE1 and GTF2I. As to expression, ubiquitously expressed in all embryonic stages and adult tissues.

It is found in the nucleus. Functionally, plays a role in the regulation of cell morphology and cytoskeletal organization. The chain is Zinc finger MYM-type protein 3 (Zmym3) from Mus musculus (Mouse).